The following is a 655-amino-acid chain: Very long-chain specific acyl-CoA dehydrogenase, mitochondrial (655 aa).

The transit peptide at 1 to 40 (MQAARIAPSLGRQLLRFGGGSSRPTALLGQPWPGPARRPY) directs the protein to the mitochondrion. A catalytic region spans residues 41-482 (AGGAAQLALD…ALQGCMDKGK (442 aa)). Residue Lys51 is modified to N6-acetyllysine. Lys71 bears the N6-acetyllysine; alternate mark. Lys71 carries the post-translational modification N6-succinyllysine; alternate. N6-succinyllysine is present on Lys195. Residue 214–223 (FCLTEPSSGS) coordinates FAD. At Cys237 the chain carries S-nitrosocysteine. Lys239 carries the post-translational modification N6-acetyllysine; alternate. Residue Lys239 is modified to N6-succinyllysine; alternate. 249 to 251 (WIS) is an FAD binding site. An N6-acetyllysine; alternate mark is found at Lys276 and Lys278. N6-succinyllysine; alternate is present on residues Lys276 and Lys278. The residue at position 298 (Lys298) is an N6-acetyllysine. Residue Lys331 is modified to N6-acetyllysine; alternate. At Lys331 the chain carries N6-succinyllysine; alternate. An N6-succinyllysine modification is found at Lys372. Residue 461–463 (FEG) participates in substrate binding. The active-site Proton acceptor is the Glu462. 464–466 (TND) serves as a coordination point for FAD. Lys482 is modified (N6-acetyllysine; alternate). Residue Lys482 is modified to N6-succinyllysine; alternate. The interval 483 to 516 (ELSGLGSALKNPFGNAGLLLGEAGKQLRRRAGLG) is membrane-anchoring. 2 positions are modified to phosphoserine: Ser517 and Ser522. Lys550 is modified (N6-acetyllysine). Lys556 bears the N6-acetyllysine; alternate mark. An N6-succinyllysine; alternate modification is found at Lys556. Residue Gln562 coordinates FAD. Lys639 is modified (N6-succinyllysine).

The protein belongs to the acyl-CoA dehydrogenase family. Homodimer. Homodimerizes after import into the mitochondrion. FAD is required as a cofactor. S-nitrosylation at Cys-237 in liver improves catalytic efficiency.

The protein localises to the mitochondrion inner membrane. The enzyme catalyses a very-long-chain 2,3-saturated fatty acyl-CoA + oxidized [electron-transfer flavoprotein] + H(+) = a very-long-chain (2E)-enoyl-CoA + reduced [electron-transfer flavoprotein]. The catalysed reaction is dodecanoyl-CoA + oxidized [electron-transfer flavoprotein] + H(+) = (2E)-dodecenoyl-CoA + reduced [electron-transfer flavoprotein]. It carries out the reaction tetradecanoyl-CoA + oxidized [electron-transfer flavoprotein] + H(+) = (2E)-tetradecenoyl-CoA + reduced [electron-transfer flavoprotein]. It catalyses the reaction oxidized [electron-transfer flavoprotein] + hexadecanoyl-CoA + H(+) = (2E)-hexadecenoyl-CoA + reduced [electron-transfer flavoprotein]. The enzyme catalyses octadecanoyl-CoA + oxidized [electron-transfer flavoprotein] + H(+) = (2E)-octadecenoyl-CoA + reduced [electron-transfer flavoprotein]. The catalysed reaction is eicosanoyl-CoA + oxidized [electron-transfer flavoprotein] + H(+) = (2E)-eicosenoyl-CoA + reduced [electron-transfer flavoprotein]. It carries out the reaction docosanoyl-CoA + oxidized [electron-transfer flavoprotein] + H(+) = (2E)-docosenoyl-CoA + reduced [electron-transfer flavoprotein]. It catalyses the reaction tetracosanoyl-CoA + oxidized [electron-transfer flavoprotein] + H(+) = (2E)-tetracosenoyl-CoA + reduced [electron-transfer flavoprotein]. It participates in lipid metabolism; mitochondrial fatty acid beta-oxidation. Its function is as follows. Very long-chain specific acyl-CoA dehydrogenase is one of the acyl-CoA dehydrogenases that catalyze the first step of mitochondrial fatty acid beta-oxidation, an aerobic process breaking down fatty acids into acetyl-CoA and allowing the production of energy from fats. The first step of fatty acid beta-oxidation consists in the removal of one hydrogen from C-2 and C-3 of the straight-chain fatty acyl-CoA thioester, resulting in the formation of trans-2-enoyl-CoA. Among the different mitochondrial acyl-CoA dehydrogenases, very long-chain specific acyl-CoA dehydrogenase acts specifically on acyl-CoAs with saturated 12 to 24 carbons long primary chains. This chain is Very long-chain specific acyl-CoA dehydrogenase, mitochondrial, found in Macaca fascicularis (Crab-eating macaque).